A 282-amino-acid polypeptide reads, in one-letter code: MSGLRTLLGLGLLVAGSRLPRVISQQSVCRARPIWWGTQRRGSETMAGAAVKYLSQEEAQAVDQELFNEYQFSVDQLMELAGLSCATAIAKAYPPTSMSKSPPTVLVICGPGNNGGDGLVCARHLKLFGYQPTIYYPKRPNKPLFTGLVTQCQKMDIPFLGEMPPEPMMVDELYELVVDAIFGFSFKGDVREPFHSILSVLSGLTVPIASIDIPSGWDVEKGNPSGIQPDLLISLTAPKKSATHFTGRYHYLGGRFVPPALEKKYQLNLPSYPDTECVYRLQ.

A mitochondrion-targeting transit peptide spans 1–53 (MSGLRTLLGLGLLVAGSRLPRVISQQSVCRARPIWWGTQRRGSETMAGAAVKY). Residue Ser-43 is modified to Phosphoserine; by PKA. Residues 59-269 (AQAVDQELFN…ALEKKYQLNL (211 aa)) form the YjeF N-terminal domain. (6S)-NADPHX is bound at residue 113–117 (NNGGD). Residue Asn-114 coordinates K(+). Lys-138 carries the post-translational modification N6-succinyllysine. Residue Asp-179 coordinates K(+). (6S)-NADPHX is bound by residues 183 to 189 (GFSFKGD) and Asp-212. Ser-215 serves as a coordination point for K(+).

This sequence belongs to the NnrE/AIBP family. In terms of assembly, homodimer. Interacts with APOA1 and APOA2. Requires K(+) as cofactor. In terms of processing, undergoes physiological phosphorylation during sperm capacitation, downstream to PKA activation. As to expression, detected in testis and sperm (at protein level). Expressed at high levels in heart, liver, kidney, and testis.

The protein localises to the mitochondrion. The protein resides in the secreted. The enzyme catalyses (6R)-NADHX = (6S)-NADHX. The catalysed reaction is (6R)-NADPHX = (6S)-NADPHX. In terms of biological role, catalyzes the epimerization of the S- and R-forms of NAD(P)HX, a damaged form of NAD(P)H that is a result of enzymatic or heat-dependent hydration. This is a prerequisite for the S-specific NAD(P)H-hydrate dehydratase to allow the repair of both epimers of NAD(P)HX. Accelerates cholesterol efflux from endothelial cells to high-density lipoprotein (HDL) and thereby regulates angiogenesis. This Mus musculus (Mouse) protein is NAD(P)H-hydrate epimerase.